Here is a 3011-residue protein sequence, read N- to C-terminus: MSTIPKPQRKTKRNTNRRPQDVKFPGGGQIVGGVYLLPRRGPRLGVRATRKTSERSQPRGRRQPIPKVRRPEGRTWAQPGYPWPLYGNEGCGWAGWLLSPRGSRPSWGPTDPRRRSRNLGKVIDTLTCGFADLMGYIPLVGAPLGGAARALAHGVRVLEDGVNYATGNLPGCSFSIFLLALLSCLTVPASAYQVRNSTGLYHVTNDCPNSSIVYEAHDAILHTPGCVPCVREGNVSRCWVAMTPTVATRDGKLPATQLRRHIDLLVGSATLCSALYVGDLCGSVFLIGQLFTFSPRRHWTTQGCNCSIYPGHITGHRMAWDMMMNWSPTAALVMAQLLRIPQAILDMIAGAHWGVLAGIAYFSMVGNWAKVLVVLLLFAGVDAETIVSGGQAARAMSGLVSLFTPGAKQNIQLINTNGSWHINSTALNCNESLNTGWLAGLIYQHKFNSSGCPERLASCRRLTDFDQGWGPISHANGSGPDQRPYCWHYPPKPCGIVPAKSVCGPVYCFTPSPVVVGTTDRSGAPTYNWGANDTDVFVLNNTRPPLGNWFGCTWMNSTGFTKVCGAPPCVIGGGGNNTLHCPTDCFRKHPEATYSRCGSGPWITPRCLVDYPYRLWHYPCTINYTIFKVRMYVGGVEHRLDAACNWTRGERCDLEDRDRSELSPLLLSTTQWQVLPCSFTTLPALSTGLIHLHQNIVDVQYLYGVGSSIASWAIKWEYVVLLFLLLADARVCSCLWMMLLISQAEAALENLVILNAASLAGTRGLVSFLVFFCFAWYLKGRWVPGAAYALYGMWPLLLLLLALPQRAYALDTEVAASCGGVVLVGLMALTLSPYYKRCISWCLWWLQYFLTRVEAQLHVWVPPLNVRGGRDAVILLMCVVHPTLVFDITKLLLAVLGPLWILQASLLKVPYFVRVQGLLRICALARKMVGGHYVQMAIIKLGALTGTYVYNHLTPLRDWAHNGLRDLAVAVEPVVFSQMETKLITWGADTAACGDIINGLPVSARKGREILLGPADGMVSKGWRLLAPITAYAQQTRGLLGCIITSLTGRDKNQVEGEVQIVSTAAQTFLATCINGVCWTVYHGAGTRTIASPKGPVIQMYTNVDQDLVGWPAPQGARSLTPCTCGSSDLYLVTRHADVIPVRRRGDSRGSLLSPRPISYLKGSSGGPLLCPAGHVVGIFRAAVCTRGVAKAVDFIPVESLETTMRSPVFTDNSSPPAVPQSFQVAHLHAPTGSGKSTKVPAAYAAQGYKVLVLNPSVAATLGFGAYMSKAHGIDPNIRTGVRTITTGSPITYSTYGKFLADGGCSGGAYDIIICDECHSTDATSVLGIGTVLDQAETAGARLVVLATATPPGSITVPHANIEEVALSTTGEIPFYGKAIPLEAIKGGRHLIFCHSKKKCDELAAKLVALGVNAVAYYRGLDVSVIPTSGDVVVVATDALMTGYTGDFDSVIDCNTCVTQTVDFSLDPTFTIETTTLPQDAVSRTQRRGRTGRGKPGIYRFVAPGERPSGMFDSSILCECYDTGCAWYELTPAETTVRLRAYMNTPGLPVCQDHLEFWEGVFTGLTHIDAHFLSQTKQGGENFPYLVAYQATVCARAQAPPPSWDQMWKCLIRLKPTLHGPTPLLYRLGAVQGEVTLTHPVTKYIMTCMSADLEVVTSTWVLVGGVLAALAAYCLSTGCVVIVGRIVLSGRPAIIPDREVLYREFDEMEECSQHLPYIEQGMMLAEQFKQKALGLLQTASRQAEVIAPTVQTNWQKLEAFWAKHMWNFISGIQYLAGLSTLPGNPAIASLMAFTAAVTSPLTTSQTLLFNILGGWVAAQLAAPGAATAFVGSGLAGAAVGSVGLGRVLVDILAGYGAGVAGALVAFKIMSGELPSTEDLVNLLPAILSPGALVVGVVCAAILRRHVGPGEGAVQWMNRLIAFASRGNHVSPTHYVPESDAAARVTAILSSLTVTQLLRRLHQWLSSESTTPCSGSWLRDIWDWICEVLSDFKTWLKTKLMPHLPGIPFVSCQHGYKGVWRGDGIMHTRCHCGAEITGHVKNGTMRIVGPKTCRNMWSGTFPINAYTTGPCTPLPAPNYTFALWRVSAEEYVEIRRVGDFHYVTGMTTDNLKCPCQVPSPEFFTELDGVRLHRFAPPCKPLLREEVSFRVGLHDYPVGSQLPCEPEPDVAVLTSMLTDPSHITAAAAGRRLARGSPPSEASSSASQLSAPSLKATCTINHDSPDAELIEANLLWRQEMGGNITRVESENKVVILDSFDPLVAEEDEREISVPAEILRKSRRFTQALPIWARPDYNPPLIETWKKPNYEPPVVHGCPLPPPQSPPVPPPRKKRTVVLTESTLSTALAELAAKSFGSSSTSGITGDNTTTSSEPAPSGCSPDSDAESYSSMPPLEGEPGDPDLSDGSWSTVSSEAGTEDVVCCSMSYTWTGALITPCAAEEQKLPINALSNSLLRHHNLVYSTTSRSACQRQKKVTFDRLQVLDSHYQDVLKEVKAAASKVKANLLSVEEACSLTPPHSAKSKFGYGAKDVRCHARKAVNHINSVWKDLLEDSVTPIQTTIMAKNEVFCVQPEKGGRKPARLIVFPDLGVRVCEKMALYDVVSKLPPAVMGSSYGFQYSPGQRVEFLVQAWKSKRTPMGFSYDTRCFDSTVTESDIRTEEAIYQCCDLDPQARVAIRSLTERLYVGGPLTNSRGENCGYRRCRASGVLTTSCGNTLTCYIKARAACRAAGLQDCTMLVCGDDLVVICESAGVQEDAASLRAFTEAMTRYSAPPGDPPQPEYDLELITSCSSNVSVAHDGTGKRVYYLTRDPTTPLARAAWETARHTPVNSWLGNIIMFAPTLWARMILMTHFFSVLIARDQLEQALDCEIYGACYSIEPLDLPPIIQRLHGLSAFSLHSYSPGEINRVAACLRKLGVPPLRAWRHRARSVRARLLSRGGRAAICGKYLFNWAVRTKLKLTPIAAAGRLDLSGWFTAGYSGGDIYHSVSHARPRWFWFCLLLLAAGVGIYLLPNR.

An N-acetylserine; by host modification is found at S2. Positions 2–23 are interaction with STAT1; the sequence is STIPKPQRKTKRNTNRRPQDVK. An interaction with EIF2AK2/PKR region spans residues 2–58; the sequence is STIPKPQRKTKRNTNRRPQDVKFPGGGQIVGGVYLLPRRGPRLGVRATRKTSERSQP. The interval 2–59 is interaction with DDX3X; sequence STIPKPQRKTKRNTNRRPQDVKFPGGGQIVGGVYLLPRRGPRLGVRATRKTSERSQPR. Residues 2 to 75 are disordered; the sequence is STIPKPQRKT…PKVRRPEGRT (74 aa). Topologically, residues 2 to 168 are cytoplasmic; sequence STIPKPQRKT…EDGVNYATGN (167 aa). Short sequence motifs (nuclear localization signal) lie at residues 5 to 13 and 38 to 43; these read PKPQRKTKR and PRRGPR. Basic residues predominate over residues 7–16; the sequence is PQRKTKRNTN. A compositionally biased stretch (low complexity) spans 32 to 47; that stretch reads GGVYLLPRRGPRLGVR. Residue S53 is modified to Phosphoserine; by host. 2 consecutive short sequence motifs (nuclear localization signal) follow at residues 58–64 and 66–71; these read PRGRRQP and PKVRRP. Residues 58 to 68 are compositionally biased toward basic residues; sequence PRGRRQPIPKV. S99 carries the phosphoserine; by host modification. The interval 112–152 is important for endoplasmic reticulum and mitochondrial localization; sequence PRRRSRNLGKVIDTLTCGFADLMGYIPLVGAPLGGAARALA. S116 is subject to Phosphoserine; by host PKA. The interaction with APOA2 stretch occupies residues 122–173; the sequence is VIDTLTCGFADLMGYIPLVGAPLGGAARALAHGVRVLEDGVNYATGNLPGCS. The interval 164 to 167 is important for lipid droplets localization; that stretch reads YATG. The chain crosses the membrane as a helical span at residues 169-189; the sequence is LPGCSFSIFLLALLSCLTVPA. A propeptide spans 178–191 (ER anchor for the core protein, removed in mature form by host signal peptidase); sequence LLALLSCLTVPASA. The Lumenal portion of the chain corresponds to 190-358; the sequence is SAYQVRNSTG…AGAHWGVLAG (169 aa). N-linked (GlcNAc...) asparagine; by host glycosylation is found at N196, N209, and N234. Residues 265-296 are important for fusion; the sequence is LVGSATLCSALYVGDLCGSVFLIGQLFTFSPR. The N-linked (GlcNAc...) asparagine; by host glycan is linked to N305. Residues 359–379 form a helical membrane-spanning segment; it reads IAYFSMVGNWAKVLVVLLLFA. The Lumenal portion of the chain corresponds to 380–725; it reads GVDAETIVSG…WEYVVLLFLL (346 aa). The segment at 385–411 is HVR1; sequence TIVSGGQAARAMSGLVSLFTPGAKQNI. 4 N-linked (GlcNAc...) (high mannose) asparagine; by host glycosylation sites follow: N417, N423, N430, and N448. Intrachain disulfides connect C429-C552, C452-C459, C486-C494, and C503-C508. The tract at residues 474 to 479 is HVR2; sequence HANGSG. The interval 480 to 493 is CD81-binding 1; sequence PDQRPYCWHYPPKP. An N-linked (GlcNAc...) (high mannose) asparagine; by host glycan is attached at N532. A glycan (N-linked (GlcNAc...) asparagine; by host) is linked at N540. A CD81-binding 2 region spans residues 544–551; the sequence is PPLGNWFG. A glycan (N-linked (GlcNAc...) (high mannose) asparagine; by host) is linked at N556. C564 and C569 are joined by a disulfide. N-linked (GlcNAc...) (high mannose) asparagine; by host glycosylation occurs at N576. 3 disulfide bridges follow: C581–C585, C597–C620, and C607–C644. 2 N-linked (GlcNAc...) (high mannose) asparagine; by host glycosylation sites follow: N623 and N645. A disulfide bridge links C652 with C677. The PKR/eIF2-alpha phosphorylation homology domain (PePHD) stretch occupies residues 660-671; the sequence is SELSPLLLSTTQ. Residues 726–746 traverse the membrane as a helical segment; it reads LADARVCSCLWMMLLISQAEA. The Lumenal portion of the chain corresponds to 747-757; that stretch reads ALENLVILNAA. Residues 758 to 778 form a helical membrane-spanning segment; the sequence is SLAGTRGLVSFLVFFCFAWYL. Topologically, residues 779-781 are cytoplasmic; it reads KGR. The helical transmembrane segment at 782–803 threads the bilayer; the sequence is WVPGAAYALYGMWPLLLLLLAL. At 804–813 the chain is on the lumenal side; the sequence is PQRAYALDTE. The helical transmembrane segment at 814–834 threads the bilayer; it reads VAASCGGVVLVGLMALTLSPY. The Cytoplasmic segment spans residues 835–838; that stretch reads YKRC. A helical membrane pass occupies residues 839–859; sequence ISWCLWWLQYFLTRVEAQLHV. Residues 860-881 lie on the Lumenal side of the membrane; it reads WVPPLNVRGGRDAVILLMCVVH. A helical membrane pass occupies residues 882 to 902; that stretch reads PTLVFDITKLLLAVLGPLWIL. The Peptidase C18 domain occupies 903 to 1026; it reads QASLLKVPYF…GMVSKGWRLL (124 aa). The Cytoplasmic segment spans residues 903–1657; it reads QASLLKVPYF…CMSADLEVVT (755 aa). Positions 904 to 1206 are protease NS2-3; it reads ASLLKVPYFV…PVESLETTMR (303 aa). C922 carries the S-palmitoyl cysteine; by host lipid modification. The segment at 929–949 is interaction with host SCPS1; it reads VGGHYVQMAIIKLGALTGTYV. Active-site for protease NS2 activity; shared with dimeric partner residues include H952, E972, and C993. Positions 1027-1208 constitute a Peptidase S29 domain; the sequence is APITAYAQQT…ESLETTMRSP (182 aa). Residues H1083 and D1107 each act as charge relay system; for serine protease NS3 activity in the active site. Zn(2+) contacts are provided by C1123 and C1125. S1165 functions as the Charge relay system; for serine protease NS3 activity in the catalytic mechanism. Zn(2+) contacts are provided by C1171 and H1175. The region spanning 1217–1369 is the Helicase ATP-binding domain; the sequence is PAVPQSFQVA…ANIEEVALST (153 aa). 1230–1237 serves as a coordination point for ATP; the sequence is APTGSGKS. Mg(2+) contacts are provided by S1237 and E1317. The short motif at 1316–1319 is the DECH box element; that stretch reads DECH. An RNA-binding region spans residues 1486-1497; sequence QRRGRTGRGKPG. Residues 1658–1678 traverse the membrane as a helical segment; the sequence is STWVLVGGVLAALAAYCLSTG. The NS3-binding stretch occupies residues 1679–1690; the sequence is CVVIVGRIVLSG. The Cytoplasmic portion of the chain corresponds to 1679-1805; that stretch reads CVVIVGRIVL…AVTSPLTTSQ (127 aa). A helical membrane pass occupies residues 1806 to 1824; the sequence is TLLFNILGGWVAAQLAAPG. Over 1825–1828 the chain is Lumenal; the sequence is AATA. A helical membrane pass occupies residues 1829 to 1849; the sequence is FVGSGLAGAAVGSVGLGRVLV. Position 1850 (D1850) is a topological domain, cytoplasmic. Residues 1851–1871 form a helical membrane-spanning segment; the sequence is ILAGYGAGVAGALVAFKIMSG. Residues 1872–1881 lie on the Lumenal side of the membrane; the sequence is ELPSTEDLVN. Residues 1882–1902 form a helical membrane-spanning segment; sequence LLPAILSPGALVVGVVCAAIL. Topologically, residues 1903–1972 are cytoplasmic; it reads RRHVGPGEGA…WLSSESTTPC (70 aa). The S-palmitoyl cysteine; by host moiety is linked to residue C1972. An intramembrane segment occupies 1973–2002; it reads SGSWLRDIWDWICEVLSDFKTWLKTKLMPH. Topologically, residues 2003–2990 are cytoplasmic; sequence LPGIPFVSCQ…YHSVSHARPR (988 aa). Residues C2011, C2029, C2031, and C2052 each coordinate Zn(2+). Residues 2120 to 2208 form an FKBP8-binding region; the sequence is EFFTELDGVR…ASSSASQLSA (89 aa). A transcriptional activation region spans residues 2120-2332; sequence EFFTELDGVR…PVPPPRKKRT (213 aa). The interval 2135–2139 is interaction with non-structural protein 4A; it reads PPCKP. Positions 2187-2207 are disordered; that stretch reads GRRLARGSPPSEASSSASQLS. Residues 2189–2441 are interaction with host SKP2; that stretch reads RLARGSPPSE…TPCAAEEQKL (253 aa). The residue at position 2194 (S2194) is a Phosphoserine; by host; in p56. S2197, S2201, S2204, S2207, and S2210 each carry phosphoserine; by host; in p58. Positions 2210 to 2249 are ISDR; sequence SLKATCTINHDSPDAELIEANLLWRQEMGGNITRVESENK. Residues 2210 to 2275 form an interaction with EIF2AK2/PKR region; that stretch reads SLKATCTINH…REISVPAEIL (66 aa). The segment at 2249–2306 is NS4B-binding; it reads KVVILDSFDPLVAEEDEREISVPAEILRKSRRFTQALPIWARPDYNPPLIETWKKPNY. Residues 2312 to 2334 form a disordered region; that stretch reads HGCPLPPPQSPPVPPPRKKRTVV. A compositionally biased stretch (pro residues) spans 2315–2326; sequence PLPPPQSPPVPP. Positions 2322 to 2325 match the SH3-binding motif; the sequence is PPVP. The Nuclear localization signal signature appears at 2326 to 2334; the sequence is PPRKKRTVV. K2350 participates in a covalent cross-link: Glycyl lysine isopeptide (Lys-Gly) (interchain with G-Cter in ubiquitin). Over residues 2351–2369 the composition is skewed to low complexity; the sequence is SFGSSSTSGITGDNTTTSS. The segment at 2351 to 2408 is disordered; sequence SFGSSSTSGITGDNTTTSSEPAPSGCSPDSDAESYSSMPPLEGEPGDPDLSDGSWSTV. A V3 region spans residues 2354–2377; the sequence is SSSTSGITGDNTTTSSEPAPSGCS. Phosphoserine; by host occurs at positions 2449 and 2462. In terms of domain architecture, RdRp catalytic spans 2634 to 2752; sequence PMGFSYDTRC…ICESAGVQED (119 aa). Residues D2640, D2738, and D2739 each contribute to the Mg(2+) site. The helical transmembrane segment at 2991–3011 threads the bilayer; it reads WFWFCLLLLAAGVGIYLLPNR.

Belongs to the hepacivirus polyprotein family. In terms of assembly, homooligomer. Interacts with E1 (via C-terminus). Interacts with the non-structural protein 5A. Interacts (via N-terminus) with host STAT1 (via SH2 domain); this interaction results in decreased STAT1 phosphorylation and ubiquitin-mediated proteasome-dependent STAT1 degradation, leading to decreased IFN-stimulated gene transcription. Interacts with host STAT3; this interaction constitutively activates STAT3. Interacts with host LTBR receptor. Interacts with host TNFRSF1A receptor and possibly induces apoptosis. Interacts with host HNRPK. Interacts with host YWHAE. Interacts with host UBE3A/E6AP. Interacts with host DDX3X. Interacts with host APOA2. Interacts with host RXRA protein. Interacts with host SP110 isoform 3/Sp110b; this interaction sequesters the transcriptional corepressor SP110 away from the nucleus. Interacts with host CREB3 nuclear transcription protein; this interaction triggers cell transformation. Interacts with host ACY3. Interacts with host C1QR1. Interacts with host RBM24; this interaction, which enhances the interaction of the mature core protein with 5'-UTR, may inhibit viral translation and favor replication. Interacts with host EIF2AK2/PKR; this interaction induces the autophosphorylation of EIF2AK2. Part of the viral assembly initiation complex composed of NS2, E1, E2, NS3, NS4A, NS5A and the mature core protein. Forms a heterodimer with envelope glycoprotein E2. Interacts with mature core protein. Interacts with protease NS2. The heterodimer E1/E2 interacts with host CLDN1; this interaction plays a role in viral entry into host cell. Interacts with host SPSB2 (via C-terminus). Part of the viral assembly initiation complex composed of NS2, E1, E2, NS3, NS4A, NS5A and the mature core protein. Interacts with host NEURL3; this interaction prevents E1 binding to glycoprotein E2. As to quaternary structure, forms a heterodimer with envelope glycoprotein E1. Interacts with host CD81 and SCARB1 receptors; these interactions play a role in viral entry into host cell. Interacts with host EIF2AK2/PKR; this interaction inhibits EIF2AK2 and probably allows the virus to evade the innate immune response. Interacts with host CD209/DC-SIGN and CLEC4M/DC-SIGNR. Interact with host SPCS1; this interaction is essential for viral particle assembly. Interacts with protease NS2. The heterodimer E1/E2 interacts with host CLDN1; this interaction plays a role in viral entry into host cell. Part of the viral assembly initiation complex composed of NS2, E1, E2, NS3, NS4A, NS5A and the mature core protein. Interacts with host SLC3A2/4F2hc; the interaction may facilitate viral entry into host cell. Interacts with human PLSCR1. In terms of assembly, homohexamer. Homoheptamer. Interacts with protease NS2. Homodimer. Interacts with host SPCS1; this interaction is essential for viral particle assembly. Interacts with envelope glycoprotein E1. Interacts with envelope glycoprotein E2. Interacts with viroporin p7. Interacts with serine protease/helicase NS3. Part of the replication complex composed of NS2, NS3, NS4A, NS4B, NS5A and the RNA-directed RNA polymerase embedded in an ER-derived membranous web. Part of the viral assembly initiation complex composed of NS2, E1, E2, NS3, NS4A, NS5A and the mature core protein. As to quaternary structure, interacts with protease NS2. Interacts with non-structural protein 4A; this interaction stabilizes the folding of NS3 serine protease. NS3-NS4A interaction is essential for NS3 activation and allows membrane anchorage of the latter. NS3/NS4A complex also prevents phosphorylation of host IRF3, thus preventing the establishment of dsRNA induced antiviral state. Interacts with host MAVS; this interaction leads to the cleavage and inhibition of host MAVS. Interacts with host TICAM1; this interaction leads to the cleavage and inhibition of host TICAM1. Interacts with host TANK-binding kinase/TBK1; this interaction results in the inhibition of the association between TBK1 and IRF3, which leads to the inhibition of IRF3 activation. Interacts with host RBM24. Part of the replication complex composed of NS2, NS3, NS4A, NS4B, NS5A and the RNA-directed RNA polymerase embedded in an ER-derived membranous web. Part of the viral assembly initiation complex composed of NS2, E1, E2, NS3, NS4A, NS5A and the mature core protein. In terms of assembly, interacts with NS3 serine protease; this interaction stabilizes the folding of NS3 serine protease. NS3-NS4A interaction is essential for NS3 activation and allows membrane anchorage of the latter. Interacts with non-structural protein 5A (via N-terminus). Part of the replication complex composed of NS2, NS3, NS4A, NS4B, NS5A and the RNA-directed RNA polymerase embedded in an ER-derived membranous web. Part of the viral assembly initiation complex composed of NS2, E1, E2, NS3, NS4A, NS5A and the mature core protein. Homomultimer. Interacts with non-structural protein NS5A. Interacts with host PLA2G4C; this interaction likely initiates the recruitment of replication complexes to lipid droplets. Interacts with host STING; this interaction disrupts the interaction between STING and TBK1 thereby suppressing the interferon signaling. Part of the replication complex composed of NS2, NS3, NS4A, NS4B, NS5A and the RNA-directed RNA polymerase embedded in an ER-derived membranous web. As to quaternary structure, monomer. Homodimer; dimerization is required for RNA-binding. Interacts with the mature core protein. Interacts (via N-terminus) with non-structural protein 4A. Interacts with non-structural protein 4B. Interacts (via region D2) with RNA-directed RNA polymerase. Part of the viral assembly initiation complex composed of NS2, E1, E2, NS3, NS4A, NS5A and the mature core protein. Part of the replication complex composed of NS2, NS3, NS4A, NS4B, NS5A and the RNA-directed RNA polymerase embedded in an ER-derived membranous web. Interacts with host GRB2. Interacts with host BIN1. Interacts with host PIK3R1. Interacts with host SRCAP. Interacts with host FKBP8. Interacts (via C-terminus) with host VAPB (via MSP domain). Interacts with host EIF2AK2/PKR; this interaction leads to disruption of EIF2AK2 dimerization by NS5A and probably allows the virus to evade the innate immune response. Interacts (via N-terminus) with host PACSIN2 (via N-terminus); this interaction attenuates protein kinase C alpha-mediated phosphorylation of PACSIN2 by disrupting the interaction between PACSIN2 and PRKCA. Interacts (via N-terminus) with host SRC kinase (via SH2 domain). Interacts with most Src-family kinases. Interacts with host IFI27 and SKP2; promotes the ubiquitin-mediated proteasomal degradation of NS5A. Interacts with host GPS2. Interacts with host TNFRSF21; this interaction allows the modulation by the virus of JNK, p38 MAPK, STAT3, and Akt signaling pathways in a DR6-dependent manner. Interacts (via N-terminus) with host CIDEB (via N-terminus); this interaction seems to regulate the association of HCV particles with APOE. Interacts with host CHKA/Choline Kinase-alpha; CHKA bridges host PI4KA and NS5A and potentiates NS5A-stimulated PI4KA activity, which then facilitates the targeting of the ternary complex to the ER for viral replication. Interacts with host SPSB2 (via C-terminus); this interaction targets NS5A for ubiquitination and degradation. Interacts with host RAB18; this interaction may promote the association of NS5A and other replicase components with lipid droplets. Interacts (via region D2) with host PPIA/CYPA; the interaction stimulates RNA-binding ability of NS5A and is dependent on the peptidyl-prolyl cis-trans isomerase activity of PPIA/CYPA. Interacts with host TRIM14; this interaction induces the degradation of NS5A. In terms of assembly, homooligomer. Interacts with non-structural protein 5A. Interacts with host VAPB. Interacts with host PRK2/PKN2. Interacts with host HNRNPA1 and SEPT6; these interactions facilitate viral replication. Part of the replication complex composed of NS2, NS3, NS4A, NS4B, NS5A and the RNA-directed RNA polymerase. It depends on Zn(2+) as a cofactor. Requires Mg(2+) as cofactor. Post-translationally, specific enzymatic cleavages in vivo yield mature proteins. The structural proteins, core, E1, E2 and p7 are produced by proteolytic processing by host signal peptidases. The core protein precursor is synthesized as a 23 kDa, which is retained in the ER membrane through the hydrophobic signal peptide. Cleavage by the signal peptidase releases the 21 kDa mature core protein. The cleavage of the core protein precursor occurs between aminoacids 176 and 188 but the exact cleavage site is not known. Some degraded forms of the core protein appear as well during the course of infection. The other proteins (p7, NS2, NS3, NS4A, NS4B, NS5A and NS5B) are cleaved by the viral proteases. Autoprocessing between NS2 and NS3 is mediated by the NS2 cysteine protease catalytic domain and regulated by the NS3 N-terminal domain. In terms of processing, phosphorylated by host PKC and PKA. Ubiquitinated; mediated by UBE3A and leading to core protein subsequent proteasomal degradation. Post-translationally, highly N-glycosylated. In terms of processing, palmitoylation is required for NS2/3 autoprocessing and E2 recruitment to membranes. Palmitoylated. This modification may play a role in its polymerization or in protein-protein interactions. Post-translationally, phosphorylated on serines in a basal form termed p56. p58 is a hyperphosphorylated form of p56. p56 and p58 coexist in the cell in roughly equivalent amounts. Hyperphosphorylation is dependent on the presence of NS4A. Host CSNK1A1/CKI-alpha or RPS6KB1 kinases may be responsible for NS5A phosphorylation. In terms of processing, tyrosine phosphorylation is essential for the interaction with host SRC. The N-terminus is phosphorylated by host PRK2/PKN2.

It is found in the host endoplasmic reticulum membrane. The protein localises to the host mitochondrion membrane. Its subcellular location is the virion. The protein resides in the host cytoplasm. It localises to the host nucleus. It is found in the host lipid droplet. The protein localises to the virion membrane. Its subcellular location is the host mitochondrion. The protein resides in the host cell membrane. It localises to the host perinuclear region. It carries out the reaction Hydrolysis of four peptide bonds in the viral precursor polyprotein, commonly with Asp or Glu in the P6 position, Cys or Thr in P1 and Ser or Ala in P1'.. The enzyme catalyses a ribonucleoside 5'-triphosphate + H2O = a ribonucleoside 5'-diphosphate + phosphate + H(+). The catalysed reaction is ATP + H2O = ADP + phosphate + H(+). It catalyses the reaction RNA(n) + a ribonucleoside 5'-triphosphate = RNA(n+1) + diphosphate. Inhibited by the antiviral drug hexamethylene amiloride. Inhibition by amantadine appears to be genotype-dependent. Also inhibited by long-alkyl-chain iminosugar derivatives. Its activity is regulated as follows. Activity is up-regulated by PRK2/PKN2-mediated phosphorylation. In terms of biological role, packages viral RNA to form a viral nucleocapsid, and promotes virion budding. Participates in the viral particle production as a result of its interaction with the non-structural protein 5A. Binds RNA and may function as a RNA chaperone to induce the RNA structural rearrangements taking place during virus replication. Modulates viral translation initiation by interacting with viral IRES and 40S ribosomal subunit. Affects various cell signaling pathways, host immunity and lipid metabolism. Prevents the establishment of cellular antiviral state by blocking the interferon-alpha/beta (IFN-alpha/beta) and IFN-gamma signaling pathways and by blocking the formation of phosphorylated STAT1 and promoting ubiquitin-mediated proteasome-dependent degradation of STAT1. Activates STAT3 leading to cellular transformation. Regulates the activity of cellular genes, including c-myc and c-fos. May repress the promoter of p53, and sequester CREB3 and SP110 isoform 3/Sp110b in the cytoplasm. Represses cell cycle negative regulating factor CDKN1A, thereby interrupting an important check point of normal cell cycle regulation. Targets transcription factors involved in the regulation of inflammatory responses and in the immune response: suppresses TNF-induced NF-kappa-B activation, and activates AP-1. Binds to dendritic cells (DCs) via C1QR1, resulting in down-regulation of T-lymphocytes proliferation. Alters lipid metabolism by interacting with hepatocellular proteins involved in lipid accumulation and storage. Induces up-regulation of FAS promoter activity, and thereby contributes to the increased triglyceride accumulation in hepatocytes (steatosis). Forms a heterodimer with envelope glycoprotein E2, which mediates virus attachment to the host cell, virion internalization through clathrin-dependent endocytosis and fusion with host membrane. Fusion with the host cell is most likely mediated by both E1 and E2, through conformational rearrangements of the heterodimer required for fusion rather than a classical class II fusion mechanism. E1/E2 heterodimer binds host apolipoproteins such as APOB and ApoE thereby forming a lipo-viro-particle (LVP). APOE associated to the LVP allows the initial virus attachment to cell surface receptors such as the heparan sulfate proteoglycans (HSPGs), syndecan-1 (SDC1), syndecan-1 (SDC2), the low-density lipoprotein receptor (LDLR) and scavenger receptor class B type I (SCARB1). The cholesterol transfer activity of SCARB1 allows E2 exposure and binding of E2 to SCARB1 and the tetraspanin CD81. E1/E2 heterodimer binding on CD81 activates the epithelial growth factor receptor (EGFR) signaling pathway. Diffusion of the complex E1-E2-EGFR-SCARB1-CD81 to the cell lateral membrane allows further interaction with Claudin 1 (CLDN1) and occludin (OCLN) to finally trigger HCV entry. Its function is as follows. Forms a heterodimer with envelope glycoprotein E1, which mediates virus attachment to the host cell, virion internalization through clathrin-dependent endocytosis and fusion with host membrane. Fusion with the host cell is most likely mediated by both E1 and E2, through conformational rearrangements of the heterodimer required for fusion rather than a classical class II fusion mechanism. The interaction between envelope glycoprotein E2 and host apolipoprotein E/APOE allows the proper assembly, maturation and infectivity of the viral particles. This interaction is probably promoted via the up-regulation of cellular autophagy by the virus. E1/E2 heterodimer binds host apolipoproteins such as APOB and APOE thereby forming a lipo-viro-particle (LVP). APOE associated to the LVP allows the initial virus attachment to cell surface receptors such as the heparan sulfate proteoglycans (HSPGs), syndecan-1 (SDC1), syndecan-1 (SDC2), the low-density lipoprotein receptor (LDLR) and scavenger receptor class B type I (SCARB1). The cholesterol transfer activity of SCARB1 allows E2 exposure and binding of E2 to SCARB1 and the tetraspanin CD81. E1/E2 heterodimer binding on CD81 activates the epithelial growth factor receptor (EGFR) signaling pathway. Diffusion of the complex E1-E2-EGFR-SCARB1-CD81 to the cell lateral membrane allows further interaction with Claudin 1 (CLDN1) and occludin (OCLN) to finally trigger HCV entry. Inhibits host EIF2AK2/PKR activation, preventing the establishment of an antiviral state. Viral ligand for CD209/DC-SIGN and CLEC4M/DC-SIGNR, which are respectively found on dendritic cells (DCs), and on liver sinusoidal endothelial cells and macrophage-like cells of lymph node sinuses. These interactions allow the capture of circulating HCV particles by these cells and subsequent facilitated transmission to permissive cells such as hepatocytes and lymphocyte subpopulations. The interaction between E2 and host amino acid transporter complex formed by SLC3A2 and SLC7A5/LAT1 may facilitate viral entry into host cell. Functionally, ion channel protein that acts as a viroporin and plays an essential role in the assembly, envelopment and secretion of viral particles. Regulates the host cell secretory pathway, which induces the intracellular retention of viral glycoproteins and favors assembly of viral particles. Creates a pore in acidic organelles and releases Ca(2+) and H(+) in the cytoplasm of infected cells, leading to a productive viral infection. High levels of cytoplasmic Ca(2+) may trigger membrane trafficking and transport of viral ER-associated proteins to viroplasms, sites of viral genome replication. This ionic imbalance induces the assembly of the inflammasome complex, which triggers the maturation of pro-IL-1beta into IL-1beta through the action of caspase-1. Targets also host mitochondria and induces mitochondrial depolarization. In addition of its role as a viroporin, acts as a lipid raft adhesion factor. In terms of biological role, cysteine protease required for the proteolytic auto-cleavage between the non-structural proteins NS2 and NS3. The N-terminus of NS3 is required for the function of NS2 protease (active region NS2-3). Promotes the initiation of viral particle assembly by mediating the interaction between structural and non-structural proteins. Displays three enzymatic activities: serine protease with a chymotrypsin-like fold, NTPase and RNA helicase. NS3 serine protease, in association with NS4A, is responsible for the cleavages of NS3-NS4A, NS4A-NS4B, NS4B-NS5A and NS5A-NS5B. The NS3/NS4A complex prevents phosphorylation of host IRF3, thus preventing the establishment of dsRNA induced antiviral state. The NS3/NS4A complex induces host amino acid transporter component SLC3A2, thus contributing to HCV propagation. NS3 RNA helicase binds to RNA and unwinds both dsDNA and dsRNA in the 3' to 5' direction, and likely resolves RNA complicated stable secondary structures in the template strand. Binds a single ATP and catalyzes the unzipping of a single base pair of dsRNA. Inhibits host antiviral proteins TBK1 and IRF3 thereby preventing the establishment of an antiviral state. Cleaves host MAVS/CARDIF thereby preventing the establishment of an antiviral state. Cleaves host TICAM1/TRIF, thereby disrupting TLR3 signaling and preventing the establishment of an antiviral state. Its function is as follows. Induces a specific membrane alteration that serves as a scaffold for the virus replication complex. This membrane alteration gives rise to the so-called ER-derived membranous web that contains the replication complex. NS4B self-interaction contributes to its function in membranous web formation. Promotes host TRIF protein degradation in a CASP8-dependent manner thereby inhibiting host TLR3-mediated interferon signaling. Disrupts the interaction between STING and TBK1 contributing to the inhibition of interferon signaling. Functionally, phosphorylated protein that is indispensable for viral replication and assembly. Both hypo- and hyperphosphorylated states are required for the viral life cycle. The hyperphosphorylated form of NS5A is an inhibitor of viral replication. Involved in RNA-binding and especially in binding to the viral genome. Zinc is essential for RNA-binding. Participates in the viral particle production as a result of its interaction with the mature viral core protein. Its interaction with host VAPB may target the viral replication complex to vesicles. Down-regulates viral IRES translation initiation. Mediates interferon resistance, presumably by interacting with and inhibiting host EIF2AK2/PKR. Prevents BIN1-induced apoptosis. Acts as a transcriptional activator of some host genes important for viral replication when localized in the nucleus. Via the interaction with host PACSIN2, modulates lipid droplet formation in order to promote virion assembly. Modulates TNFRSF21/DR6 signaling pathway for viral propagation. In terms of biological role, RNA-dependent RNA polymerase that performs primer-template recognition and RNA synthesis during viral replication. Initiates RNA transcription/replication at a flavin adenine dinucleotide (FAD), resulting in a 5'- FAD cap on viral RNAs. In this way, recognition of viral 5' RNA by host pattern recognition receptors can be bypassed, thereby evading activation of antiviral pathways. This is Genome polyprotein from Hepatitis C virus genotype 1b (isolate HC-J1) (HCV).